The following is an 877-amino-acid chain: Leucine--tRNA ligase (877 aa).

A 'HIGH' region motif is present at residues 50–60 (PYPSGKLHMGH). Residues 634 to 638 (KMSKS) carry the 'KMSKS' region motif. Lys-637 lines the ATP pocket.

Belongs to the class-I aminoacyl-tRNA synthetase family.

Its subcellular location is the cytoplasm. It catalyses the reaction tRNA(Leu) + L-leucine + ATP = L-leucyl-tRNA(Leu) + AMP + diphosphate. This Hydrogenovibrio crunogenus (strain DSM 25203 / XCL-2) (Thiomicrospira crunogena) protein is Leucine--tRNA ligase.